A 262-amino-acid chain; its full sequence is Flap endonuclease Xni (262 aa).

D105 contacts Mg(2+). A 5'-3' exonuclease domain is found at E162–K257. K(+)-binding residues include L172, A173, P181, I183, and I186. The segment at G185–S190 is interaction with DNA.

Belongs to the Xni family. Mg(2+) is required as a cofactor. K(+) serves as cofactor.

Its function is as follows. Has flap endonuclease activity. During DNA replication, flap endonucleases cleave the 5'-overhanging flap structure that is generated by displacement synthesis when DNA polymerase encounters the 5'-end of a downstream Okazaki fragment. In Shewanella baltica (strain OS155 / ATCC BAA-1091), this protein is Flap endonuclease Xni.